The following is an 853-amino-acid chain: E3 ubiquitin-protein ligase RNF216 (853 aa).

Disordered stretches follow at residues 33 to 102 (TISD…DDIV), 125 to 152 (PLEVQNQSSEDSETELLSNPGEPAASVD), and 165 to 228 (PYFQ…AHPL). The segment covering 53–73 (QQEDDLDDDVILTEDDSEDEY) has biased composition (acidic residues). Residue lysine 89 forms a Glycyl lysine isopeptide (Lys-Gly) (interchain with G-Cter in SUMO2) linkage. Glycyl lysine isopeptide (Lys-Gly) (interchain with G-Cter in SUMO2) cross-links involve residues lysine 339 and lysine 342. Serine 407 carries the post-translational modification Phosphoserine. Residues lysine 413, lysine 418, lysine 436, lysine 447, and lysine 473 each participate in a glycyl lysine isopeptide (Lys-Gly) (interchain with G-Cter in SUMO2) cross-link. Positions 463-479 (VKQEQEFYEQKIKEMAE) form a coiled coil. A TRIAD supradomain region spans residues 499-716 (QLIECRCCYG…SPGAPCQECS (218 aa)). Zn(2+)-binding residues include cysteine 503, cysteine 506, cysteine 525, cysteine 528, cysteine 593, and cysteine 596. The RING-type 1 zinc finger occupies 503–552 (CRCCYGEFPFEELTQCADAHLFCKECLIRYAQEAVFGSGKSELSCMEGSC). An IBR-type zinc finger spans residues 571-636 (YKYYERKAEE…LWKEHNGLTC (66 aa)). Lysine 607 participates in a covalent cross-link: Glycyl lysine isopeptide (Lys-Gly) (interchain with G-Cter in SUMO2). Zn(2+)-binding residues include cysteine 611, cysteine 616, cysteine 621, cysteine 624, histidine 631, and cysteine 636. Glycyl lysine isopeptide (Lys-Gly) (interchain with G-Cter in SUMO2) cross-links involve residues lysine 646 and lysine 654. Zn(2+) is bound by residues cysteine 663 and cysteine 666. The RING-type 2; atypical zinc-finger motif lies at 663–691 (CHKCGTGLIKSEGCNRMSCRCGAQMCYLC). Cysteine 676 is a catalytic residue. Cysteine 681, cysteine 683, cysteine 688, cysteine 691, histidine 704, and cysteine 712 together coordinate Zn(2+). A coiled-coil region spans residues 725 to 751 (TEDDEKLIEEIQKEAEEEQKRKNGENT). Residues lysine 753 and lysine 761 each participate in a glycyl lysine isopeptide (Lys-Gly) (interchain with G-Cter in SUMO2) cross-link.

Interacts with UBE2L3 and to some extent with UBE2L6. Interacts with TRAF3, TLR3, TLR4, TLR5 and TLR9. Isoform 3/ZIN binds RIPK1. Post-translationally, auto-ubiquitinated. Phosphorylation at Ser-719 enhances acceptor ubiquitin binding and chain-type specificity towards 'Lys-63' di-ubiquitin but not di-ubiquitin with other linkage types.

Its subcellular location is the cytoplasm. It is found in the cytoplasmic vesicle. It localises to the clathrin-coated vesicle. The catalysed reaction is S-ubiquitinyl-[E2 ubiquitin-conjugating enzyme]-L-cysteine + [acceptor protein]-L-lysine = [E2 ubiquitin-conjugating enzyme]-L-cysteine + N(6)-ubiquitinyl-[acceptor protein]-L-lysine.. Its pathway is protein modification; protein ubiquitination. With respect to regulation, allosterically activated by 'Lys-63'-linked di-ubiquitin. E3 ubiquitin ligase which accepts ubiquitin from specific E2 ubiquitin-conjugating enzymes, and then transfers it to substrates promoting their ubiquitination. Plays a role in the regulation of antiviral responses by promoting the degradation of TRAF3, TLR4 and TLR9. In turn, down-regulates NF-kappa-B and IRF3 activation as well as beta interferon production. Also participates in the regulation of autophagy by ubiquitinating BECN1 leading to its degradation and autophagy inhibition. Plays a role in ARC-dependent synaptic plasticity by mediating ARC ubiquitination resulting in its rapid proteasomal degradation. Plays aso an essential role in spermatogenesis and male fertility. Mechanistically, regulates meiosis by promoting the degradation of PRKACB through the ubiquitin-mediated lysosome pathway. Modulates the gonadotropin-releasing hormone signal pathway by affecting the stability of STAU2 that is required for the microtubule-dependent transport of neuronal RNA from the cell body to the dendrite. The protein is E3 ubiquitin-protein ligase RNF216 (Rnf216) of Mus musculus (Mouse).